The chain runs to 865 residues: Xylosyltransferase 2 (865 aa).

Topologically, residues 1–15 (MVASARVQKLVRRYK) are cytoplasmic. Residues 16-36 (LAIATALAILLLQGLVVWSFS) traverse the membrane as a helical; Signal-anchor for type II membrane protein segment. Over 37–865 (GLEEDEPGEK…GPVKADGRLR (829 aa)) the chain is Lumenal. A disordered region spans residues 39–155 (EEDEPGEKGR…SVEGAPQPTD (117 aa)). Basic and acidic residues predominate over residues 53-65 (RPLDPGEGSKDTD). Basic residues predominate over residues 73–82 (SAGRRHGRWR). Asparagine 122 is a glycosylation site (N-linked (GlcNAc...) asparagine). Intrachain disulfides connect cysteine 162–cysteine 190, cysteine 206–cysteine 448, cysteine 467–cysteine 480, and cysteine 469–cysteine 478. UDP-alpha-D-xylose-binding positions include valine 239, aspartate 267, and 296–298 (TIW). A glycan (N-linked (GlcNAc...) asparagine) is linked at asparagine 327. 400–401 (DW) contacts UDP-alpha-D-xylose. UDP-alpha-D-xylose is bound by residues serine 481 and 504–505 (RK). 2 disulfides stabilise this stretch: cysteine 581-cysteine 833 and cysteine 826-cysteine 839. N-linked (GlcNAc...) asparagine glycosylation occurs at asparagine 683.

Belongs to the glycosyltransferase 14 family. XylT subfamily. As to quaternary structure, monomer. It depends on Mg(2+) as a cofactor. The cofactor is Mn(2+). In terms of processing, contains disulfide bonds. Detected in brain, liver, lung, kidney, heart, spleen and testis, and at lower levels in skeletal muscle.

The protein localises to the golgi apparatus membrane. It is found in the secreted. The enzyme catalyses UDP-alpha-D-xylose + L-seryl-[protein] = 3-O-(beta-D-xylosyl)-L-seryl-[protein] + UDP + H(+). Its pathway is glycan metabolism; chondroitin sulfate biosynthesis. It functions in the pathway glycan metabolism; heparan sulfate biosynthesis. In terms of biological role, catalyzes the first step in the biosynthesis of chondroitin sulfate, heparan sulfate and dermatan sulfate proteoglycans, such as DCN. Transfers D-xylose from UDP-D-xylose to specific serine residues of the core protein. The sequence is that of Xylosyltransferase 2 (Xylt2) from Mus musculus (Mouse).